A 346-amino-acid chain; its full sequence is MVGGGGKRRTAGAGPQCEKTVEVKKSKFSEADVSSDLRKEVENLYKLSLPEDFYHFWKFCEELDPEKPADALATSLGLRLVGPYDILAGKHKMKKKPTGLNCNLHWRFYYDPPEFQTIIIGDNKTQYHMGYFRDSPDELPVYVGTNEAKKNCIIIQNGDNVFAAIKLFLMKKLKEVTDRKKISILKNIDEKLTEAARKLGYSLEQRTVKMRQRDKKVVTKTFHGAGLVVPVDKNDVGYRELPETDADLKRICKAVVDAASDEERLKAFAPIQEMMTFVQFANDECDYGMGLELGMDLFCYGSHYFHKVAGQLLPLAYNLLKRDLFAKIIEDHLASRSEENIDQLAG.

Met-1 carries the N-acetylmethionine modification. An N6-acetyllysine mark is found at Lys-19, Lys-186, and Lys-233. The residue at position 235 (Asp-235) is a PolyADP-ribosyl aspartic acid. Tyr-238 bears the ADP-ribosyltyrosine mark. Glu-240 carries the post-translational modification PolyADP-ribosyl glutamic acid. Residues 242–346 form an interaction with PARP1 region; that stretch reads PETDADLKRI…SEENIDQLAG (105 aa). The active-site Proton donor is the Glu-284.

The protein belongs to the HPF1 family. In terms of assembly, interacts with PARP1 (via the PARP catalytic domain). Interacts with PARP2 (via the PARP catalytic domain). Interacts with core nucleosomes in a PARP1- and PARP2-dependent manner.

The protein resides in the chromosome. Its subcellular location is the nucleus. In terms of biological role, cofactor for serine ADP-ribosylation that confers serine specificity on PARP1 and PARP2 and plays a key role in DNA damage response. Initiates the repair of double-strand DNA breaks: recruited to DNA damage sites by PARP1 and PARP2 and switches the amino acid specificity of PARP1 and PARP2 from aspartate or glutamate to serine residues, licensing serine ADP-ribosylation of target proteins. Serine ADP-ribosylation of target proteins, such as histones, promotes decompaction of chromatin and the recruitment of repair factors leading to the reparation of DNA strand breaks. Serine ADP-ribosylation of proteins constitutes the primary form of ADP-ribosylation of proteins in response to DNA damage. HPF1 acts by completing the active site of PARP1 and PARP2: forms a composite active site composed of residues from HPF1 and PARP1 or PARP2. While HPF1 promotes the initiation of serine ADP-ribosylation, it restricts the polymerase activity of PARP1 and PARP2 in order to limit the length of poly-ADP-ribose chains. HPF1 also promotes tyrosine ADP-ribosylation, probably by conferring tyrosine specificity on PARP1. In Mus musculus (Mouse), this protein is Histone PARylation factor 1.